The sequence spans 226 residues: 2-C-methyl-D-erythritol 4-phosphate cytidylyltransferase (226 aa).

This sequence belongs to the IspD/TarI cytidylyltransferase family. IspD subfamily.

The enzyme catalyses 2-C-methyl-D-erythritol 4-phosphate + CTP + H(+) = 4-CDP-2-C-methyl-D-erythritol + diphosphate. Its pathway is isoprenoid biosynthesis; isopentenyl diphosphate biosynthesis via DXP pathway; isopentenyl diphosphate from 1-deoxy-D-xylulose 5-phosphate: step 2/6. Its function is as follows. Catalyzes the formation of 4-diphosphocytidyl-2-C-methyl-D-erythritol from CTP and 2-C-methyl-D-erythritol 4-phosphate (MEP). This chain is 2-C-methyl-D-erythritol 4-phosphate cytidylyltransferase, found in Haemophilus ducreyi (strain 35000HP / ATCC 700724).